A 126-amino-acid chain; its full sequence is Ribosome-binding factor A (126 aa).

Belongs to the RbfA family. In terms of assembly, monomer. Binds 30S ribosomal subunits, but not 50S ribosomal subunits or 70S ribosomes.

The protein localises to the cytoplasm. Functionally, one of several proteins that assist in the late maturation steps of the functional core of the 30S ribosomal subunit. Associates with free 30S ribosomal subunits (but not with 30S subunits that are part of 70S ribosomes or polysomes). Required for efficient processing of 16S rRNA. May interact with the 5'-terminal helix region of 16S rRNA. In Nitrosospira multiformis (strain ATCC 25196 / NCIMB 11849 / C 71), this protein is Ribosome-binding factor A.